A 372-amino-acid chain; its full sequence is Probable dual-specificity RNA methyltransferase RlmN (372 aa).

Residues M1–M20 are disordered. E112 (proton acceptor) is an active-site residue. Residues Y118–R357 form the Radical SAM core domain. The cysteines at positions 125 and 363 are disulfide-linked. [4Fe-4S] cluster contacts are provided by C132, C136, and C139. S-adenosyl-L-methionine is bound by residues G187–E188, S221, S244–H246, and N320. The active-site S-methylcysteine intermediate is the C363.

The protein belongs to the radical SAM superfamily. RlmN family. [4Fe-4S] cluster serves as cofactor.

It is found in the cytoplasm. It carries out the reaction adenosine(2503) in 23S rRNA + 2 reduced [2Fe-2S]-[ferredoxin] + 2 S-adenosyl-L-methionine = 2-methyladenosine(2503) in 23S rRNA + 5'-deoxyadenosine + L-methionine + 2 oxidized [2Fe-2S]-[ferredoxin] + S-adenosyl-L-homocysteine. It catalyses the reaction adenosine(37) in tRNA + 2 reduced [2Fe-2S]-[ferredoxin] + 2 S-adenosyl-L-methionine = 2-methyladenosine(37) in tRNA + 5'-deoxyadenosine + L-methionine + 2 oxidized [2Fe-2S]-[ferredoxin] + S-adenosyl-L-homocysteine. Its function is as follows. Specifically methylates position 2 of adenine 2503 in 23S rRNA and position 2 of adenine 37 in tRNAs. This Salinispora tropica (strain ATCC BAA-916 / DSM 44818 / JCM 13857 / NBRC 105044 / CNB-440) protein is Probable dual-specificity RNA methyltransferase RlmN.